Here is a 318-residue protein sequence, read N- to C-terminus: Olfactory receptor 56A1 (318 aa).

The Extracellular segment spans residues 1-32 (MIQPMASPSNSSTVPVSEFLLICFPNFQSWQH). The N-linked (GlcNAc...) asparagine glycan is linked to asparagine 10. The helical transmembrane segment at 33–53 (WLSLPLSLLFLLAMGANTTLL) threads the bilayer. Topologically, residues 54–61 (ITIQLEAS) are cytoplasmic. A helical transmembrane segment spans residues 62-82 (LHQPLYYLLSLLSLLDIVLCL). Residues 83 to 106 (TVIPKVLAIFWYDLRSISFPACFL) are Extracellular-facing. Cysteine 104 and cysteine 196 are joined by a disulfide. Residues 107–127 (QMFIMNSFLPMESCTFMVMAY) form a helical membrane-spanning segment. The Cytoplasmic segment spans residues 128–146 (DRYVAICHPLRYPSIITNQ). The helical transmembrane segment at 147–167 (FVAKASVFIVVRNALLTAPIP) threads the bilayer. Residues 168 to 203 (ILTSLLHYCGENVIENCICANLSVSRLSCDNFTLNR) lie on the Extracellular side of the membrane. 2 N-linked (GlcNAc...) asparagine glycosylation sites follow: asparagine 188 and asparagine 198. The chain crosses the membrane as a helical span at residues 204–224 (IYQFVAGWTLLGSDLFLIFLS). The Cytoplasmic portion of the chain corresponds to 225-244 (YTFILRAVLRFKAEGAAVKA). A helical transmembrane segment spans residues 245–265 (LSTCGSHFILILFFSTILLVV). At 266-280 (VLTNVARKKVPMDIL) the chain is on the extracellular side. Residues 281 to 301 (ILLNVLHHLIPPALNPIVYGV) traverse the membrane as a helical segment. Residues 302 to 318 (RTKEIKQGIQKLLQRGR) are Cytoplasmic-facing.

Belongs to the G-protein coupled receptor 1 family.

Its subcellular location is the cell membrane. Its function is as follows. Odorant receptor. The chain is Olfactory receptor 56A1 (OR56A1) from Homo sapiens (Human).